We begin with the raw amino-acid sequence, 878 residues long: Serine/threonine-protein kinase D2 (878 aa).

Positions 1-12 (MATAPSYPAGLP) are enriched in low complexity. The segment at 1–35 (MATAPSYPAGLPGSPGPGSPPPPGGLELQSPPPLL) is disordered. Pro residues predominate over residues 14 to 35 (SPGPGSPPPPGGLELQSPPPLL). Phosphoserine is present on Ser30. At Tyr87 the chain carries Phosphotyrosine. Residues 138–188 (PHALTVHSYRAPAFCDHCGEMLFGLVRQGLKCDGCGLNYHKRCAFSIPNNC) form a Phorbol-ester/DAG-type 1 zinc finger. Phosphoserine occurs at positions 197, 198, 200, 203, 206, 212, and 214. Residues 224 to 247 (RSTTELLPRRPPSSSSSSSASSYT) are disordered. The segment covering 236–245 (SSSSSSSASS) has biased composition (low complexity). Phosphoserine; by CSNK1D and CSNK1E is present on Ser244. The segment at 264 to 314 (PHTFLIHSYTRPTVCQACKKLLKGLFRQGLQCKDCKFNCHKRCATRVPNDC) adopts a Phorbol-ester/DAG-type 2 zinc-finger fold. The interval 343–373 (ESEDSGVIPGSHSENALHASEEEEGEGGKAQ) is disordered. Positions 397–509 (TTLREGWVVH…WETAIRQALM (113 aa)) constitute a PH domain. Position 407 is a phosphotyrosine (Tyr407). Tyr438 bears the Phosphotyrosine; by ABL1 mark. Ser518 bears the Phosphoserine mark. The Protein kinase domain maps to 551 to 807 (IFPDEVLGSG…VDKSLSHPWL (257 aa)). ATP is bound by residues 557 to 565 (LGSGQFGVV) and Lys580. Asp674 functions as the Proton acceptor in the catalytic mechanism. Position 706 is a phosphoserine; by PKC (Ser706). Ser710 is modified (phosphoserine). At Tyr717 the chain carries Phosphotyrosine; by ABL1. Residues 724–726 (LNQ) carry the Important for ABL1-mediated Tyr-717 phosphorylation motif. The tract at residues 844 to 869 (HPLPGSGLPTDRDLGGACPPQDHDMQ) is disordered. Ser876 is modified (phosphoserine; by autocatalysis).

The protein belongs to the protein kinase superfamily. CAMK Ser/Thr protein kinase family. PKD subfamily. In terms of assembly, interacts (via C-terminus) with LCK. Interacts (via N-terminal AP-rich region) with CIB1 isoform 2. Interacts (via N-terminus and zing-finger domain 1 and 2) with PRKCD in response to oxidative stress; the interaction is independent of PRKD2 tyrosine phosphorylation. Requires Mg(2+) as cofactor. In terms of processing, phosphorylation of Ser-876 correlates with the activation status of the kinase. Ser-706 or/and Ser-710 are probably phosphorylated by PKC. Phosphorylation at Ser-244 by CSNK1D and CSNK1E promotes nuclear localization and substrate targeting. Phosphorylation at Ser-244, Ser-706 and Ser-710 is required for nuclear localization. Phosphorylated at Tyr-438 by ABL1 in response to oxidative stress. Phosphorylated at Tyr-717 by ABL1 specifically in response to oxidative stress; requires prior phosphorylation at Ser-706 or/and Ser-710. As to expression, widely expressed.

It localises to the cytoplasm. The protein resides in the cell membrane. It is found in the nucleus. The protein localises to the golgi apparatus. Its subcellular location is the trans-Golgi network. It catalyses the reaction L-seryl-[protein] + ATP = O-phospho-L-seryl-[protein] + ADP + H(+). The enzyme catalyses L-threonyl-[protein] + ATP = O-phospho-L-threonyl-[protein] + ADP + H(+). With respect to regulation, activated by DAG and phorbol esters. Phorbol-ester/DAG-type domains bind DAG, mediating translocation to membranes. Autophosphorylation of Ser-710 and phosphorylation of Ser-706 by PKC relieves auto-inhibition by the PH domain. Catalytic activity is further increased by phosphorylation at Tyr-717 in response to oxidative stress. Its function is as follows. Serine/threonine-protein kinase that converts transient diacylglycerol (DAG) signals into prolonged physiological effects downstream of PKC, and is involved in the regulation of cell proliferation via MAPK1/3 (ERK1/2) signaling, oxidative stress-induced NF-kappa-B activation, inhibition of HDAC7 transcriptional repression, signaling downstream of T-cell antigen receptor (TCR) and cytokine production, and plays a role in Golgi membrane trafficking, angiogenesis, secretory granule release and cell adhesion. May potentiate mitogenesis induced by the neuropeptide bombesin by mediating an increase in the duration of MAPK1/3 (ERK1/2) signaling, which leads to accumulation of immediate-early gene products including FOS that stimulate cell cycle progression. In response to oxidative stress, is phosphorylated at Tyr-438 and Tyr-717 by ABL1, which leads to the activation of PRKD2 without increasing its catalytic activity, and mediates activation of NF-kappa-B. In response to the activation of the gastrin receptor CCKBR, is phosphorylated at Ser-244 by CSNK1D and CSNK1E, translocates to the nucleus, phosphorylates HDAC7, leading to nuclear export of HDAC7 and inhibition of HDAC7 transcriptional repression of NR4A1/NUR77. Upon TCR stimulation, is activated independently of ZAP70, translocates from the cytoplasm to the nucleus and is required for interleukin-2 (IL2) promoter up-regulation. During adaptive immune responses, is required in peripheral T-lymphocytes for the production of the effector cytokines IL2 and IFNG after TCR engagement and for optimal induction of antibody responses to antigens. In epithelial cells stimulated with lysophosphatidic acid (LPA), is activated through a PKC-dependent pathway and mediates LPA-stimulated interleukin-8 (IL8) secretion via a NF-kappa-B-dependent pathway. During TCR-induced T-cell activation, interacts with and is activated by the tyrosine kinase LCK, which results in the activation of the NFAT transcription factors. In the trans-Golgi network (TGN), regulates the fission of transport vesicles that are on their way to the plasma membrane and in polarized cells is involved in the transport of proteins from the TGN to the basolateral membrane. Plays an important role in endothelial cell proliferation and migration prior to angiogenesis, partly through modulation of the expression of KDR/VEGFR2 and FGFR1, two key growth factor receptors involved in angiogenesis. In secretory pathway, is required for the release of chromogranin-A (CHGA)-containing secretory granules from the TGN. Downstream of PRKCA, plays important roles in angiotensin-2-induced monocyte adhesion to endothelial cells. Plays a regulatory role in angiogenesis and tumor growth by phosphorylating a downstream mediator CIB1 isoform 2, resulting in vascular endothelial growth factor A (VEGFA) secretion. The polypeptide is Serine/threonine-protein kinase D2 (PRKD2) (Homo sapiens (Human)).